Here is a 408-residue protein sequence, read N- to C-terminus: Lipoate--protein ligase 1 (408 aa).

The N-terminal 18 residues, Met-1–Arg-18, are a transit peptide targeting the mitochondrion. Residues Lys-60–Tyr-242 enclose the BPL/LPL catalytic domain. ATP is bound by residues Arg-102, Gly-107, and Tyr-110. Gly-107 serves as a coordination point for (R)-lipoate. Asp-153 serves as a coordination point for Mg(2+). Lys-160 is a binding site for ATP. A (R)-lipoate-binding site is contributed by Lys-160.

It belongs to the LplA family.

It localises to the mitochondrion. It catalyses the reaction L-lysyl-[lipoyl-carrier protein] + (R)-lipoate + ATP = N(6)-[(R)-lipoyl]-L-lysyl-[lipoyl-carrier protein] + AMP + diphosphate + H(+). The catalysed reaction is (R)-dihydrolipoate + L-lysyl-[lipoyl-carrier protein] + ATP = N(6)-[(R)-dihydrolipoyl]-L-lysyl-[lipoyl-carrier protein] + AMP + diphosphate + H(+). It carries out the reaction (R)-dihydrolipoate + ATP + H(+) = N(6)-[(R)-dihydrolipoyl]-5'-AMP + diphosphate. The enzyme catalyses N(6)-[(R)-dihydrolipoyl]-5'-AMP + L-lysyl-[lipoyl-carrier protein] = N(6)-[(R)-dihydrolipoyl]-L-lysyl-[lipoyl-carrier protein] + AMP + 2 H(+). It participates in protein modification; protein lipoylation via exogenous pathway; protein N(6)-(lipoyl)lysine from lipoate: step 1/2. The protein operates within protein modification; protein lipoylation via exogenous pathway; protein N(6)-(lipoyl)lysine from lipoate: step 2/2. Its activity is regulated as follows. Inhibited by the lipoate analog 8-bromo-octanoate (BrO). Catalytic activity is increased in the presence of Mg(2+). Its function is as follows. Catalyzes both the ATP-dependent activation of exogenously supplied lipoate to lipoyl-AMP and the transfer of the activated lipoyl onto the lipoyl domains of lipoate-dependent enzymes. In the mitochondrion, functions as a redox switch between two lipoylation routes. Senses the oxidation state of lipoate and determines which downstream enzymes will be lipoylated. In low reducing conditions, uses lipoate in its oxidized ring form to lipoylate glycine cleavage system H-protein GCVH. In high reducing conditions and together with LipL2, uses reduced lipoate (dihydrolipoate) to lipoylate the E2 component of the branched chain alpha-ketoacid dehydrogenase complex BCKDH-E2/BCDH and the E2 component of the alpha-ketoglutarate dehydrogenase complex KDH. LipL1 is responsible for catalysing the activation of lipoate, forming lipoyl-AMP while LipL2 is required but is not capable of catalyzing this reaction. The polypeptide is Lipoate--protein ligase 1 (Plasmodium falciparum (isolate 3D7)).